A 224-amino-acid chain; its full sequence is uncharacterized protein (224 aa).

5 helical membrane passes run 32-52, 60-80, 100-120, 130-150, and 162-182; these read ILTLCQLLSPSMLVLHYPLVV, LFTNYLYAGTGFDFIMNIYFF, IIYLVKVALLIDAFSLISGLG, AIAYNWSLFNSFSKIQFLFGF, and LGFSFLTGGLPSLVVLGFGII.

It belongs to the derlin family.

The protein resides in the endoplasmic reticulum membrane. This is an uncharacterized protein from Schizosaccharomyces pombe (strain 972 / ATCC 24843) (Fission yeast).